Consider the following 456-residue polypeptide: tRNA-2-methylthio-N(6)-dimethylallyladenosine synthase (456 aa).

The MTTase N-terminal domain occupies 18–134; that stretch reads KKLFIETYGC…LPDLVASVEA (117 aa). The [4Fe-4S] cluster site is built by cysteine 27, cysteine 63, cysteine 98, cysteine 172, cysteine 176, and cysteine 179. The 233-residue stretch at 158–390 folds into the Radical SAM core domain; it reads CGNHISGFVS…IELQNRLSAE (233 aa). The TRAM domain occupies 393 to 456; sequence ARDVGKTFEV…SATLKGEEVF (64 aa).

It belongs to the methylthiotransferase family. MiaB subfamily. As to quaternary structure, monomer. The cofactor is [4Fe-4S] cluster.

It localises to the cytoplasm. It catalyses the reaction N(6)-dimethylallyladenosine(37) in tRNA + (sulfur carrier)-SH + AH2 + 2 S-adenosyl-L-methionine = 2-methylsulfanyl-N(6)-dimethylallyladenosine(37) in tRNA + (sulfur carrier)-H + 5'-deoxyadenosine + L-methionine + A + S-adenosyl-L-homocysteine + 2 H(+). Functionally, catalyzes the methylthiolation of N6-(dimethylallyl)adenosine (i(6)A), leading to the formation of 2-methylthio-N6-(dimethylallyl)adenosine (ms(2)i(6)A) at position 37 in tRNAs that read codons beginning with uridine. The protein is tRNA-2-methylthio-N(6)-dimethylallyladenosine synthase of Phocaeicola vulgatus (strain ATCC 8482 / DSM 1447 / JCM 5826 / CCUG 4940 / NBRC 14291 / NCTC 11154) (Bacteroides vulgatus).